Consider the following 404-residue polypeptide: Ubiquitin-like modifier-activating enzyme 5 (404 aa).

Serine 45 is modified (phosphoserine). Residues glycine 83, aspartate 104, lysine 127, asparagine 150, and asparagine 184 each coordinate ATP. Zn(2+) is bound by residues cysteine 226 and cysteine 229. Cysteine 250 functions as the Glycyl thioester intermediate in the catalytic mechanism. Zn(2+) contacts are provided by cysteine 303 and cysteine 308. The UFM1-interacting sequence (UIS) signature appears at 334–346 (IIHEDNEWGIELV). The interval 347–377 (SEVSEEELKNSSGPVPDLPEGITVAYTIPKK) is linker. 2 positions are modified to phosphoserine: serine 358 and serine 393. A UFC1-binding sequence (UFC) motif is present at residues 389 to 404 (DSGESLEDLMAKMKNM).

The protein belongs to the ubiquitin-activating E1 family. UBA5 subfamily. Homodimer; homodimerization is required for UFM1 activation. Interacts (via UIS motif) with UFM1; binds UFM1 via a trans-binding mechanism in which UFM1 interacts with distinct sites in both subunits of the UBA5 homodimer. Interacts (via C-terminus) with UFC1. Interacts (via UIS motif) with GABARAPL2 and, with lower affinity, with GABARAP and GABARAPL1.

It is found in the cytoplasm. The protein resides in the nucleus. It localises to the endoplasmic reticulum membrane. The protein localises to the golgi apparatus. Its function is as follows. E1-like enzyme which specifically catalyzes the first step in ufmylation. Activates UFM1 by first adenylating its C-terminal glycine residue with ATP, and thereafter linking this residue to the side chain of a cysteine residue in E1, yielding a UFM1-E1 thioester and free AMP. Activates UFM1 via a trans-binding mechanism, in which UFM1 interacts with distinct sites in both subunits of the UBA5 homodimer. Trans-binding also promotes stabilization of the UBA5 homodimer, and enhances ATP-binding. Transfer of UFM1 from UBA5 to the E2-like enzyme UFC1 also takes place using a trans mechanism. Ufmylation plays a key role in various processes, such as ribosome recycling, response to DNA damage, interferon response or reticulophagy (also called ER-phagy). Ufmylation is essential for erythroid differentiation of both megakaryocytes and erythrocytes. The chain is Ubiquitin-like modifier-activating enzyme 5 from Pongo abelii (Sumatran orangutan).